The following is a 198-amino-acid chain: MSRLILASASAARRSLLQNAGLAFESLPVRIDEDAIRQSLITEGATPRDIADALAEFKARKATERAPGHLILASDQILALRGEIFAKPRDREDAARDLHRLSGHTHHLYSAAVIYEDAKPVWRGVGTARLSMHTHSEAQINAYLDQAWPDVSSSVGAYHAEGLGAQLFSRIEGDWFSVLGLPLLQVLSYLRMRGMVAP.

Aspartate 75 serves as the catalytic Proton acceptor.

The protein belongs to the Maf family. Requires a divalent metal cation as cofactor.

It localises to the cytoplasm. The enzyme catalyses a ribonucleoside 5'-triphosphate + H2O = a ribonucleoside 5'-phosphate + diphosphate + H(+). The catalysed reaction is a 2'-deoxyribonucleoside 5'-triphosphate + H2O = a 2'-deoxyribonucleoside 5'-phosphate + diphosphate + H(+). Nucleoside triphosphate pyrophosphatase. May have a dual role in cell division arrest and in preventing the incorporation of modified nucleotides into cellular nucleic acids. The protein is Nucleoside triphosphate pyrophosphatase 1 of Jannaschia sp. (strain CCS1).